Here is a 1483-residue protein sequence, read N- to C-terminus: Rho GTPase-activating protein 23 (1483 aa).

Residues 15–34 are disordered; the sequence is PEPRPPQLPLGPRDGCSSGR. The PDZ domain maps to 71–155; sequence HCILKEEENG…TLELSIMPKD (85 aa). Disordered stretches follow at residues 212–276 and 300–345; these read ISAL…PGSR and AGER…GQEG. Residues 316 to 325 are compositionally biased toward basic and acidic residues; the sequence is SQDRLEDVTT. A compositionally biased stretch (polar residues) spans 331 to 342; that stretch reads CSTSQDALSQLG. A phosphoserine mark is found at Ser361 and Ser372. The segment at 385–407 is disordered; the sequence is PSARTSACPSRDLTQAPPPSGLQ. Ser421 carries the phosphoserine modification. Disordered stretches follow at residues 448–485 and 508–527; these read SLAQ…DHRD and NLGF…RLGR. Ser515, Ser579, Ser607, and Ser619 each carry phosphoserine. At Thr652 the chain carries Phosphothreonine. Phosphoserine is present on residues Ser655, Ser658, and Ser673. Positions 684–804 constitute a PH domain; sequence DIRREGWLYY…WIRAIRENSR (121 aa). The tract at residues 827–848 is disordered; it reads KVSHSSGPKADSSPKGSRGLGG. Lys850 participates in a covalent cross-link: Glycyl lysine isopeptide (Lys-Gly) (interchain with G-Cter in SUMO2). Disordered stretches follow at residues 860 to 879, 1093 to 1150, 1171 to 1361, and 1419 to 1469; these read RGLR…VAAP, FSDD…SWVP, KRKK…GSRP, and ELGG…LQGL. Positions 901–1093 constitute a Rho-GAP domain; the sequence is IRLEECQPAT…TLIQHSDWFF (193 aa). A compositionally biased stretch (basic and acidic residues) spans 1099–1110; sequence KGERTPVDDKEP. 2 stretches are compositionally biased toward polar residues: residues 1133 to 1144 and 1236 to 1248; these read GSDSTTCSSAKS and SIVS…STMD. Residues 1338 to 1351 show a composition bias toward low complexity; sequence GSASSSSQESLRPP. Positions 1440–1457 are enriched in polar residues; that stretch reads SGLSSLESTKARASSAAS.

In terms of biological role, GTPase activator for the Rho-type GTPases by converting them to an inactive GDP-bound state. The polypeptide is Rho GTPase-activating protein 23 (Arhgap23) (Mus musculus (Mouse)).